The sequence spans 388 residues: Outer membrane protein assembly factor BamB (388 aa).

An N-terminal signal peptide occupies residues 1-21; that stretch reads MILGWTQRIFTLLVVVTLLAA. C22 is lipidated: N-palmitoyl cysteine. C22 carries S-diacylglycerol cysteine lipidation.

This sequence belongs to the BamB family. Part of the Bam complex.

It is found in the cell outer membrane. Part of the outer membrane protein assembly complex, which is involved in assembly and insertion of beta-barrel proteins into the outer membrane. The protein is Outer membrane protein assembly factor BamB of Kangiella koreensis (strain DSM 16069 / JCM 12317 / KCTC 12182 / SW-125).